Consider the following 178-residue polypeptide: Photosystem I assembly protein Ycf4 (178 aa).

2 helical membrane-spanning segments follow: residues 19 to 39 (ILVAAMVTIGGVGFLFASLSS) and 61 to 81 (LVMGLYSIAAALLATYLWAVI).

The protein belongs to the Ycf4 family.

Its subcellular location is the cellular thylakoid membrane. Seems to be required for the assembly of the photosystem I complex. The protein is Photosystem I assembly protein Ycf4 of Synechococcus sp. (strain WH7803).